The sequence spans 33 residues: Dermaseptin-4 (33 aa).

At L33 the chain carries Leucine amide.

As to expression, expressed by the skin glands.

Its subcellular location is the secreted. Functionally, has antiparasitic activity against trypomastigote form of T.cruzi (IC(50)=0.25 uM) in vitro but not against L.infantum. Probably acts by permeabilizing cell membranes. In vitro, shows no cytotoxicity against macrophages. Has antibacterial activity. This chain is Dermaseptin-4, found in Pithecopus nordestinus (Northeastern Brazilian leaf frog).